The sequence spans 119 residues: Ribonuclease P protein component (119 aa).

It belongs to the RnpA family. In terms of assembly, consists of a catalytic RNA component (M1 or rnpB) and a protein subunit.

The enzyme catalyses Endonucleolytic cleavage of RNA, removing 5'-extranucleotides from tRNA precursor.. RNaseP catalyzes the removal of the 5'-leader sequence from pre-tRNA to produce the mature 5'-terminus. It can also cleave other RNA substrates such as 4.5S RNA. The protein component plays an auxiliary but essential role in vivo by binding to the 5'-leader sequence and broadening the substrate specificity of the ribozyme. This chain is Ribonuclease P protein component, found in Proteus mirabilis (strain HI4320).